A 556-amino-acid polypeptide reads, in one-letter code: Oxygen-dependent choline dehydrogenase (556 aa).

6–35 (DYIIIGAGSAGNVLAARLTEDPGVTVLLLE) is an FAD binding site. Catalysis depends on His475, which acts as the Proton acceptor.

Belongs to the GMC oxidoreductase family. It depends on FAD as a cofactor.

The enzyme catalyses choline + A = betaine aldehyde + AH2. It catalyses the reaction betaine aldehyde + NAD(+) + H2O = glycine betaine + NADH + 2 H(+). The protein operates within amine and polyamine biosynthesis; betaine biosynthesis via choline pathway; betaine aldehyde from choline (cytochrome c reductase route): step 1/1. Its function is as follows. Involved in the biosynthesis of the osmoprotectant glycine betaine. Catalyzes the oxidation of choline to betaine aldehyde and betaine aldehyde to glycine betaine at the same rate. This Xanthomonas euvesicatoria pv. vesicatoria (strain 85-10) (Xanthomonas campestris pv. vesicatoria) protein is Oxygen-dependent choline dehydrogenase.